Consider the following 412-residue polypeptide: Alanyl-tRNA editing protein Aarsd1 (412 aa).

Positions 108, 112, 208, and 212 each coordinate Zn(2+).

It belongs to the class-II aminoacyl-tRNA synthetase family. Alax-L subfamily. Zn(2+) is required as a cofactor.

It is found in the cytoplasm. In terms of biological role, functions in trans to edit the amino acid moiety from incorrectly charged tRNA(Ala). This Danio rerio (Zebrafish) protein is Alanyl-tRNA editing protein Aarsd1 (aarsd1).